Reading from the N-terminus, the 179-residue chain is MAQFSESADVPDMGRRQFMNLLTFGTVTGVALGALYPVVNYFIPPATGGAGGGTTAKDELGNDVSVTKFLENRNAGDRNLVQGLKGDPTYIVVDSKEAIKDYGINAICTHLGCVVPWNVAENKFKCPCHGSQYDETGKVVRGPAPLSLALAHTNVSDDKIVLTPWTETDFRTGDAPWWS.

Residues 21–43 (LLTFGTVTGVALGALYPVVNYFI) form a helical membrane-spanning segment. Residues 61–162 (GNDVSVTKFL…TNVSDDKIVL (102 aa)) enclose the Rieske domain. Residues cysteine 108, histidine 110, cysteine 126, and histidine 129 each coordinate [2Fe-2S] cluster. A disulfide bond links cysteine 113 and cysteine 128.

It belongs to the Rieske iron-sulfur protein family. As to quaternary structure, the 4 large subunits of the cytochrome b6-f complex are cytochrome b6, subunit IV (17 kDa polypeptide, PetD), cytochrome f and the Rieske protein, while the 4 small subunits are PetG, PetL, PetM and PetN. The complex functions as a dimer. Requires [2Fe-2S] cluster as cofactor.

The protein localises to the cellular thylakoid membrane. It catalyses the reaction 2 oxidized [plastocyanin] + a plastoquinol + 2 H(+)(in) = 2 reduced [plastocyanin] + a plastoquinone + 4 H(+)(out). Its function is as follows. Component of the cytochrome b6-f complex, which mediates electron transfer between photosystem II (PSII) and photosystem I (PSI), cyclic electron flow around PSI, and state transitions. This chain is Cytochrome b6-f complex iron-sulfur subunit, found in Nostoc punctiforme (strain ATCC 29133 / PCC 73102).